Here is a 185-residue protein sequence, read N- to C-terminus: Casparian strip membrane protein 5 (185 aa).

The Cytoplasmic segment spans residues 1-25 (MKAEAVESGEASTIIAAPKRGINRG). Residues 26 to 46 (ISIADLILRGVAAIGTFASAL) traverse the membrane as a helical segment. At 47–75 (TMGTTSETLTIFTQPIMIRAKYNDLPSLT) the chain is on the extracellular side. Residues 76–96 (FFVIANSIVCGYLVLSIPLSI) form a helical membrane-spanning segment. At 97–108 (SHFIRREARITR) the chain is on the cytoplasmic side. A helical membrane pass occupies residues 109–129 (IILVIFDTAMVELLTAGASAA). At 130 to 160 (TVVVYLAHKRNANWLAICQQFNNFCERISGS) the chain is on the extracellular side. A helical membrane pass occupies residues 161 to 181 (LIGSFASIIMIMLIIITSAVA). Residues 182–185 (LSRH) lie on the Cytoplasmic side of the membrane.

This sequence belongs to the Casparian strip membrane proteins (CASP) family. As to quaternary structure, homodimer and heterodimers.

The protein localises to the cell membrane. Regulates membrane-cell wall junctions and localized cell wall deposition. Required for establishment of the Casparian strip membrane domain (CSD) and the subsequent formation of Casparian strips, a cell wall modification of the root endodermis that determines an apoplastic barrier between the intraorganismal apoplasm and the extraorganismal apoplasm and prevents lateral diffusion. The chain is Casparian strip membrane protein 5 from Populus trichocarpa (Western balsam poplar).